Consider the following 213-residue polypeptide: NADH-quinone oxidoreductase subunit I (213 aa).

2 consecutive 4Fe-4S ferredoxin-type domains span residues 74–103 and 113–142; these read RFIE…METS and GNYS…HGTE. [4Fe-4S] cluster is bound by residues Cys-83, Cys-86, Cys-89, Cys-93, Cys-122, Cys-125, Cys-128, and Cys-132.

It belongs to the complex I 23 kDa subunit family. In terms of assembly, NDH-1 is composed of 14 different subunits. Subunits NuoA, H, J, K, L, M, N constitute the membrane sector of the complex. [4Fe-4S] cluster serves as cofactor.

The protein resides in the cell inner membrane. It carries out the reaction a quinone + NADH + 5 H(+)(in) = a quinol + NAD(+) + 4 H(+)(out). NDH-1 shuttles electrons from NADH, via FMN and iron-sulfur (Fe-S) centers, to quinones in the respiratory chain. The immediate electron acceptor for the enzyme in this species is believed to be ubiquinone. Couples the redox reaction to proton translocation (for every two electrons transferred, four hydrogen ions are translocated across the cytoplasmic membrane), and thus conserves the redox energy in a proton gradient. The polypeptide is NADH-quinone oxidoreductase subunit I (Campylobacter jejuni subsp. jejuni serotype O:6 (strain 81116 / NCTC 11828)).